We begin with the raw amino-acid sequence, 262 residues long: Small ribosomal subunit protein eS1 (262 aa).

Residues 234–251 show a composition bias toward basic and acidic residues; that stretch reads DPKEDSGKNVKSLPESKE. Positions 234–262 are disordered; the sequence is DPKEDSGKNVKSLPESKEATNILTAELKH.

This sequence belongs to the eukaryotic ribosomal protein eS1 family. As to quaternary structure, component of the small ribosomal subunit. Mature ribosomes consist of a small (40S) and a large (60S) subunit. The 40S subunit contains about 33 different proteins and 1 molecule of RNA (18S). The 60S subunit contains about 49 different proteins and 3 molecules of RNA (25S, 5.8S and 5S).

It localises to the cytoplasm. The chain is Small ribosomal subunit protein eS1 from Plasmodium yoelii yoelii.